The sequence spans 343 residues: Ferrochelatase (343 aa).

Fe cation is bound by residues H191 and E270.

Belongs to the ferrochelatase family.

It is found in the cytoplasm. The catalysed reaction is heme b + 2 H(+) = protoporphyrin IX + Fe(2+). It functions in the pathway porphyrin-containing compound metabolism; protoheme biosynthesis; protoheme from protoporphyrin-IX: step 1/1. Functionally, catalyzes the ferrous insertion into protoporphyrin IX. In Phenylobacterium zucineum (strain HLK1), this protein is Ferrochelatase.